Here is a 701-residue protein sequence, read N- to C-terminus: Elongation factor G (701 aa).

The tr-type G domain maps to 11–287 (TKVRNIGIMA…AVIDYLPSPL (277 aa)). GTP-binding positions include 20–27 (AHIDAGKT), 84–88 (DTPGH), and 138–141 (NKMD).

This sequence belongs to the TRAFAC class translation factor GTPase superfamily. Classic translation factor GTPase family. EF-G/EF-2 subfamily.

It is found in the cytoplasm. Its function is as follows. Catalyzes the GTP-dependent ribosomal translocation step during translation elongation. During this step, the ribosome changes from the pre-translocational (PRE) to the post-translocational (POST) state as the newly formed A-site-bound peptidyl-tRNA and P-site-bound deacylated tRNA move to the P and E sites, respectively. Catalyzes the coordinated movement of the two tRNA molecules, the mRNA and conformational changes in the ribosome. This Mycobacterium ulcerans (strain Agy99) protein is Elongation factor G.